A 384-amino-acid polypeptide reads, in one-letter code: A-type ATP synthase subunit C (384 aa).

It belongs to the V-ATPase V0D/AC39 subunit family. As to quaternary structure, has multiple subunits with at least A(3), B(3), C, D, E, F, H, I and proteolipid K(x).

The protein localises to the cell membrane. Functionally, component of the A-type ATP synthase that produces ATP from ADP in the presence of a proton gradient across the membrane. The protein is A-type ATP synthase subunit C of Methanobrevibacter smithii (strain ATCC 35061 / DSM 861 / OCM 144 / PS).